The following is a 324-amino-acid chain: Annexin A3 (324 aa).

4 Annexin repeats span residues 19 to 90 (FNPS…ALIT), 91 to 162 (APAV…TLAD), 174 to 246 (HLAK…AVVR), and 250 to 321 (NTPA…KICG). Residue Lys178 is modified to N6-acetyllysine. Residue Thr268 is modified to Phosphothreonine.

It belongs to the annexin family.

Inhibitor of phospholipase A2, also possesses anti-coagulant properties. This chain is Annexin A3 (Anxa3), found in Rattus norvegicus (Rat).